We begin with the raw amino-acid sequence, 595 residues long: Protein UL31 (595 aa).

The signal sequence occupies residues 1 to 23 (MGDKPTLVTLLTVAVSSPPPSSP). The tract at residues 47–94 (TATSEVGEKTAEQEVAAADPETGNERRENRENEGGETRTTGTTAVKRS) is disordered. The segment covering 69–82 (GNERRENRENEGGE) has biased composition (basic and acidic residues). 2 N-linked (GlcNAc...) asparagine; by host glycosylation sites follow: Asn-176 and Asn-197.

Belongs to the herpesviridae U10 family. Interacts with host CGAS.

Its subcellular location is the host cytoplasm. The protein resides in the host nucleus. Functionally, plays a role in the inhibition of host innate immune system by targeting host CGAS and promoting dissociation of DNA from CGAS, thereby inhibiting the enzymatic activity of CGAS. This Homo sapiens (Human) protein is Protein UL31.